Reading from the N-terminus, the 315-residue chain is Transaldolase (315 aa).

The active-site Schiff-base intermediate with substrate is Lys128.

The protein belongs to the transaldolase family. Type 1 subfamily. In terms of assembly, homodimer.

It is found in the cytoplasm. The enzyme catalyses D-sedoheptulose 7-phosphate + D-glyceraldehyde 3-phosphate = D-erythrose 4-phosphate + beta-D-fructose 6-phosphate. It functions in the pathway carbohydrate degradation; pentose phosphate pathway; D-glyceraldehyde 3-phosphate and beta-D-fructose 6-phosphate from D-ribose 5-phosphate and D-xylulose 5-phosphate (non-oxidative stage): step 2/3. Its function is as follows. Transaldolase is important for the balance of metabolites in the pentose-phosphate pathway. The protein is Transaldolase of Opitutus terrae (strain DSM 11246 / JCM 15787 / PB90-1).